The primary structure comprises 334 residues: DNA polymerase III subunit delta' (334 aa).

In terms of assembly, the DNA polymerase III holoenzyme complex contains at least 10 different subunits organized into 3 functionally essential subassemblies: the Pol III core, the beta sliding clamp processivity factor and the clamp-loading complex. The Pol III core (subunits alpha, epsilon and theta) contains the polymerase and the 3'-5' exonuclease proofreading activities. The polymerase is tethered to the template via the dimeric beta sliding clamp processivity factor. The clamp-loading complex (also called gamma complex) assembles the beta sliding clamp onto the primed template and plays a central role in the organization and communication at the replication fork. The clamp-loading complex contains delta, delta', psi and chi, and 3 copies of either or both of two different DnaX proteins, gamma and tau. The DNA replisome complex has a single clamp loader (3 tau and 1 each of delta, delta', psi and chi subunits) which binds 3 Pol III cores (1 core on the leading strand and 2 on the lagging strand) each with a beta sliding clamp dimer. Additional proteins in the replisome are other copies of gamma, psi and chi, Ssb, DNA helicase and RNA primase. The clamp loader hydrolyzes ATP to assemble the beta processivity factor onto the primed template and plays a central role in the organization and communication at the replication fork; the minimal complex to load the beta sliding clamp on DNA is delta, delta', gamma.

The enzyme catalyses DNA(n) + a 2'-deoxyribonucleoside 5'-triphosphate = DNA(n+1) + diphosphate. Its function is as follows. Part of the beta sliding clamp loading complex, which hydrolyzes ATP to load the beta clamp onto primed DNA to form the DNA replication pre-initiation complex. DNA polymerase III is a complex, multichain enzyme responsible for most of the replicative synthesis in bacteria. This DNA polymerase also exhibits 3' to 5' exonuclease activity. The gamma complex (gamma(3),delta,delta') is thought to load beta dimers onto DNA by binding ATP which alters the complex's conformation so it can bind beta sliding clamp dimers and open them at one interface. Primed DNA is recognized, ATP is hydrolyzed releasing the gamma complex and closing the beta sliding clamp ring around the primed DNA. This Escherichia coli (strain K12) protein is DNA polymerase III subunit delta' (holB).